We begin with the raw amino-acid sequence, 37 residues long: Esculentin-2A (37 aa).

Cys-31 and Cys-37 are joined by a disulfide.

Belongs to the frog skin active peptide (FSAP) family. Esculentin subfamily. In terms of tissue distribution, expressed by the skin glands.

It is found in the secreted. Shows antibacterial activity against representative Gram-negative and Gram-positive bacterial species, and hemolytic activity. This chain is Esculentin-2A, found in Pelophylax lessonae (Pool frog).